Here is an 824-residue protein sequence, read N- to C-terminus: MAFPINLTQTLLFFFCPLLHLSFAAFTPTDNYLINSGSNTNTSFFTTRSFLSDSSEPGSSFLSTDRSISISDTNPSPDSPVLYNTARVFPVGGSYKFQVTTKGTHFIRLHFAPFKASRFNLRSAKFRVLINGFSVINSFSTSSVVVKEFILKIDDPVLEISFLPFKASGFGFVNAVEVFSAPKDYIMDQGTKLVIPNSAQIFSNLSSQVLETVHRINVGGSKLTPFNDTLWRTWVVDDNYLLLRAAARRAWTTHSPNYQNGGATREIAPDNVYMTAQEMDRDNQELQARFNISWGFQVDEKRVLHLVRLHFCDIVSSSLNQLYFNVFINEYLAFKDVDLSTLTFHVLASPLYIDFVAESDRSGMLRISVGPSDLSNPARVNALLNGVEIMRILSPVSSEVVSGKRNVVWIVVGSVLGGFVFLSLFFLSVLCLCRRKNNKTRSSESTGWTPLRRFRGSSNSRTTERTVSSSGYHTLRISFAELQSGTNNFDRSLVIGVGGFGMVFRGSLKDNTKVAVKRGSPGSRQGLPEFLSEITILSKIRHRHLVSLVGYCEEQSEMILVYEYMDKGPLKSHLYGSTNPPLSWKQRLEVCIGAARGLHYLHTGSSQGIIHRDIKSTNILLDNNYVAKVADFGLSRSGPCIDETHVSTGVKGSFGYLDPEYFRRQQLTDKSDVYSFGVVLFEVLCARPAVDPLLVREQVNLAEWAIEWQRKGMLDQIVDPNIADEIKPCSLKKFAETAEKCCADYGVDRPTIGDVLWNLEHVLQLQESGPLNIPEEDYGDVTDPRTARQGLSNGSNIERDYGDGTSGIISSTQVFSQLMTNAGR.

The signal sequence occupies residues Met1–Ala24. 5 N-linked (GlcNAc...) asparagine glycosylation sites follow: Asn6, Asn41, Asn204, Asn227, and Asn291. Residues Ala25 to Asn406 lie on the Extracellular side of the membrane. Residues Val407 to Leu427 traverse the membrane as a helical segment. Residues Ser428–Arg824 lie on the Cytoplasmic side of the membrane. Positions Thr440 to Val467 are disordered. Over residues Gly456–Val467 the composition is skewed to polar residues. The 276-residue stretch at Phe489–Gln764 folds into the Protein kinase domain. ATP-binding positions include Ile495–Val503 and Lys517. The active-site Proton acceptor is the Asp613. Positions Asp777–Asp803 are disordered.

Belongs to the protein kinase superfamily. Ser/Thr protein kinase family.

The protein resides in the membrane. This Arabidopsis thaliana (Mouse-ear cress) protein is Probable receptor-like protein kinase At5g24010.